The following is a 362-amino-acid chain: E3 ubiquitin-protein ligase TM129 (362 aa).

Over 1-6 (MDSPEV) the chain is Lumenal. A helical membrane pass occupies residues 7-27 (TFTLAYLVFAVCFVFTPNEFY). Over 28–56 (SAGLTVQNLLSGWLGSEDAAFVPYHLRRT) the chain is Cytoplasmic. The chain crosses the membrane as a helical span at residues 57–77 (SATLLCHSLLPLGYYMGMCFA). Topologically, residues 78-94 (ASEKQLYSPGQAPEAWQ) are lumenal. Residues 95–115 (LFLLLAVTLPLLSCTLIYYWS) form a helical membrane-spanning segment. At 116–362 (WDRWTRHPLA…FCILDVCCVR (247 aa)) the chain is on the cytoplasmic side. The RING-type; degenerate zinc-finger motif lies at 285–350 (CIGCMQTRAS…ASRVPCPTCR (66 aa)).

This sequence belongs to the TMEM129 family. In terms of assembly, integral component of ER-resident dislocation complexes.

It localises to the endoplasmic reticulum membrane. It catalyses the reaction S-ubiquitinyl-[E2 ubiquitin-conjugating enzyme]-L-cysteine + [acceptor protein]-L-lysine = [E2 ubiquitin-conjugating enzyme]-L-cysteine + N(6)-ubiquitinyl-[acceptor protein]-L-lysine.. It participates in protein modification; protein ubiquitination. Its function is as follows. E3 ubiquitin-protein ligase involved in ER-associated protein degradation, preferentially associates with the E2 enzyme UBE2J2. Exploited by viral US11 proteins to mediate HLA class I proteins degradation. The chain is E3 ubiquitin-protein ligase TM129 (Tmem129) from Mus musculus (Mouse).